Reading from the N-terminus, the 175-residue chain is RNA pyrophosphohydrolase (175 aa).

In terms of domain architecture, Nudix hydrolase spans 6 to 149; that stretch reads GYRPNVGIIL…KRQVYQQALT (144 aa). Residues 38–59 carry the Nudix box motif; the sequence is GGIKHGESPEQAMYRELYEEVG.

Belongs to the Nudix hydrolase family. RppH subfamily. It depends on a divalent metal cation as a cofactor.

Its function is as follows. Accelerates the degradation of transcripts by removing pyrophosphate from the 5'-end of triphosphorylated RNA, leading to a more labile monophosphorylated state that can stimulate subsequent ribonuclease cleavage. The protein is RNA pyrophosphohydrolase of Azoarcus sp. (strain BH72).